We begin with the raw amino-acid sequence, 512 residues long: Nuclear fusion protein FUS1 (512 aa).

Residues 72–96 (IGLSIGLPIGIFCFGLLILLCYFYL) traverse the membrane as a helical segment. Positions 97–512 (KRNSVSISNP…VPGDCLQEYD (416 aa)) are hydrophilic. T178 is subject to Phosphothreonine. S190 and S256 each carry phosphoserine. Residues T281 and T424 each carry the phosphothreonine modification. The region spanning 436 to 512 (QLGKTYTVIQ…VPGDCLQEYD (77 aa)) is the SH3 domain.

O-glycosylated.

The protein localises to the membrane. Functionally, required for cell fusion. Negatively regulates Sho1p signaling to ensure efficient cell fusion. In terms of biological role, interacts with SHO1. The polypeptide is Nuclear fusion protein FUS1 (FUS1) (Saccharomyces cerevisiae (strain ATCC 204508 / S288c) (Baker's yeast)).